Here is a 685-residue protein sequence, read N- to C-terminus: MEIRRSTEEVEENHVMQITGSNGIVHNMEFMPQAYLRNQYSSEIDIDEEFVSTYPLEDAPLPIFLKFEDVEYKVRNSHASSANLVKTMVSKVVTHTNPDPDGYKHILKGITGSTGPGEILALMGPSGSGKTTLLKIMGGRLTDNVKGKLTYNDIPYSPSVKRRIGFVTQDDVLLPQLTVEETLAFAAFLRLPSSMSKEQKYAKIEMIIKELGLERCRRTRVGGGFVKGISGGERKRASIAYEILVDPSLLLLDEPTSGLDSTSATKLLHILQGVAKAGRTVITTIHQPSSRMFHMFDKLLLISEGHPAFYGKARESMEYFSSLRILPEIAMNPAEFLLDLATGQVSDISLPDELLAAKTAQPDSEEVLLKYLKQRYKTDLEPKEKEENHRNRKAPEHLQIAIQVKKDWTLSWWDQFLILSRRTFRERRRDYFDKLRLVQSLGVAVVLGLLWWKSKTDTEAHLRDQVGLMFYICIFWTSSSLFGAVYVFPFEKIYLVKERKAEMYRLSVYYVCSTLCDMVAHVLYPTFFMIIVYFMAEFNRNIPCFLFTVLTILLIAITSQGAGEFLGASVLSIKRAGMIASLVLMLFLLTGGYYVQHIPKFMQWLKYLSFMHYGFRLLLKVQYSADQLFECGSKGGCRTLQSSSSFDTINLNGGLQELWVLLAMAFGYRLCAYFCLRKKISICHL.

The ABC transporter domain occupies L65–I329. G124–T131 lines the ATP pocket. An ABC transmembrane type-2 domain is found at D414–Y623. 6 consecutive transmembrane segments (helical) span residues F432–W452, L468–F488, M518–F538, I542–A562, A576–Q596, and T648–Y668.

It belongs to the ABC transporter superfamily. ABCG family. Eye pigment precursor importer (TC 3.A.1.204) subfamily. As to quaternary structure, homo- or heterodimer. In terms of tissue distribution, mostly expressed in flowers, especially in tapetum within anthers.

The protein localises to the cell membrane. Its subcellular location is the endoplasmic reticulum membrane. Its function is as follows. Mediates the transport of sporopollenin precursors (e.g. polyketides) across the tapetum plasma membrane into the anther locule for polymerization on developing microspore walls, thus being required for male fertility and pollen exine formation and patterning prior to tapetum programmed cell death. This chain is ABC transporter G family member 26, found in Arabidopsis thaliana (Mouse-ear cress).